Consider the following 264-residue polypeptide: Tryptophan synthase alpha chain (264 aa).

Catalysis depends on proton acceptor residues Glu49 and Asp60.

Belongs to the TrpA family. In terms of assembly, tetramer of two alpha and two beta chains.

It catalyses the reaction (1S,2R)-1-C-(indol-3-yl)glycerol 3-phosphate + L-serine = D-glyceraldehyde 3-phosphate + L-tryptophan + H2O. The protein operates within amino-acid biosynthesis; L-tryptophan biosynthesis; L-tryptophan from chorismate: step 5/5. Functionally, the alpha subunit is responsible for the aldol cleavage of indoleglycerol phosphate to indole and glyceraldehyde 3-phosphate. This chain is Tryptophan synthase alpha chain, found in Microcystis aeruginosa (strain NIES-843 / IAM M-2473).